A 430-amino-acid polypeptide reads, in one-letter code: Putative glycylpeptide N-tetradecanoyltransferase 2 (430 aa).

Tetradecanoyl-CoA is bound by residues 47–50 (HKFW), 181–183 (LCV), and 189–193 (SKGLA). Leucine 430 acts as the Proton acceptor; via carboxylate in catalysis.

It belongs to the NMT family.

It catalyses the reaction N-terminal glycyl-[protein] + tetradecanoyl-CoA = N-tetradecanoylglycyl-[protein] + CoA + H(+). Its function is as follows. May add a myristoyl group to the N-terminal glycine residue of certain cellular proteins. The polypeptide is Putative glycylpeptide N-tetradecanoyltransferase 2 (NMT2) (Arabidopsis thaliana (Mouse-ear cress)).